The following is a 206-amino-acid chain: Small ribosomal subunit protein uS4 (206 aa).

In terms of domain architecture, S4 RNA-binding spans 96–156 (TRLDNVVYRM…EKSKKQARII (61 aa)).

It belongs to the universal ribosomal protein uS4 family. Part of the 30S ribosomal subunit. Contacts protein S5. The interaction surface between S4 and S5 is involved in control of translational fidelity.

In terms of biological role, one of the primary rRNA binding proteins, it binds directly to 16S rRNA where it nucleates assembly of the body of the 30S subunit. Functionally, with S5 and S12 plays an important role in translational accuracy. In Shewanella woodyi (strain ATCC 51908 / MS32), this protein is Small ribosomal subunit protein uS4.